Reading from the N-terminus, the 77-residue chain is Exodeoxyribonuclease 7 small subunit (77 aa).

Belongs to the XseB family. Heterooligomer composed of large and small subunits.

Its subcellular location is the cytoplasm. It carries out the reaction Exonucleolytic cleavage in either 5'- to 3'- or 3'- to 5'-direction to yield nucleoside 5'-phosphates.. Its function is as follows. Bidirectionally degrades single-stranded DNA into large acid-insoluble oligonucleotides, which are then degraded further into small acid-soluble oligonucleotides. The chain is Exodeoxyribonuclease 7 small subunit from Lysinibacillus sphaericus (strain C3-41).